The chain runs to 967 residues: Phosphoenolpyruvate carboxylase (967 aa).

At S10 the chain carries Phosphoserine. Residues H171 and K601 contribute to the active site. A disordered region spans residues N915–V936. A compositionally biased stretch (basic and acidic residues) spans E924 to D933.

It belongs to the PEPCase type 1 family. Homotetramer. It depends on Mg(2+) as a cofactor.

The protein localises to the cytoplasm. It carries out the reaction oxaloacetate + phosphate = phosphoenolpyruvate + hydrogencarbonate. Its activity is regulated as follows. By light-reversible phosphorylation. Functionally, through the carboxylation of phosphoenolpyruvate (PEP) it forms oxaloacetate, a four-carbon dicarboxylic acid source for the tricarboxylic acid cycle. In Pisum sativum (Garden pea), this protein is Phosphoenolpyruvate carboxylase.